The primary structure comprises 428 residues: Transcription factor bHLH91 (428 aa).

The bHLH domain maps to 210–259; that stretch reads KRKNKPFTTERERRCHLNERYEALKLLIPSPSKGDRASILQDGIDYINEL. A disordered region spans residues 278 to 320; sequence RHKNNEVDDNNNNKNLDDHGNEDDDDDDENMEKKPESDVIDQC. Positions 297-307 are enriched in acidic residues; it reads GNEDDDDDDEN.

Homodimer. As to expression, flowers.

Its subcellular location is the nucleus. This is Transcription factor bHLH91 (BHLH91) from Arabidopsis thaliana (Mouse-ear cress).